A 432-amino-acid chain; its full sequence is Enolase (432 aa).

Q167 contributes to the (2R)-2-phosphoglycerate binding site. Catalysis depends on E209, which acts as the Proton donor. Residues D246, E290, and D317 each contribute to the Mg(2+) site. (2R)-2-phosphoglycerate is bound by residues K342, R371, S372, and K393. Catalysis depends on K342, which acts as the Proton acceptor.

This sequence belongs to the enolase family. Component of the RNA degradosome, a multiprotein complex involved in RNA processing and mRNA degradation. Requires Mg(2+) as cofactor.

Its subcellular location is the cytoplasm. It localises to the secreted. It is found in the cell surface. The enzyme catalyses (2R)-2-phosphoglycerate = phosphoenolpyruvate + H2O. Its pathway is carbohydrate degradation; glycolysis; pyruvate from D-glyceraldehyde 3-phosphate: step 4/5. Functionally, catalyzes the reversible conversion of 2-phosphoglycerate (2-PG) into phosphoenolpyruvate (PEP). It is essential for the degradation of carbohydrates via glycolysis. The polypeptide is Enolase (Salmonella dublin (strain CT_02021853)).